Reading from the N-terminus, the 377-residue chain is Probable G-protein coupled receptor F27E5.8 (377 aa).

Over 1–34 (MSEQDSSSPKYMRFLLGNFTSAEMVTDGNFLIYC) the chain is Extracellular. An N-linked (GlcNAc...) asparagine glycan is attached at Asn18. Residues 35–55 (IEMGLLVIGVLENIFMIGAVF) traverse the membrane as a helical segment. Over 56–71 (STSCLHLNLRILICNC) the chain is Cytoplasmic. A helical transmembrane segment spans residues 72 to 92 (CLGFILMAVGRAMIAVPLCIA). The Extracellular portion of the chain corresponds to 93-105 (HLRDVDISSHAWC). A helical membrane pass occupies residues 106 to 126 (FIANAVHHSSADSVCLSFVFI). The Cytoplasmic portion of the chain corresponds to 127–144 (MLERTAGTIWSKDYEKTK). The chain crosses the membrane as a helical span at residues 145 to 165 (IHIFPCIFAFLQWFIPMFMIL). Residues 166–195 (GNFLDRANRMEHFLLYPHLPCQIEYLTPTM) are Extracellular-facing. A helical transmembrane segment spans residues 196 to 216 (FMITIFIIVIGFIASVGGITI). The Cytoplasmic segment spans residues 217–251 (VYNKNIKKYNTRDIWFNTVNLSERYQITENIRSTH). Residues 252-272 (LLFPLLALMLIFSTLSVSVLI) traverse the membrane as a helical segment. Residues 273–303 (YGGYWVSVMTKEPARFEEVVKWFGRGGEAAQ) are Extracellular-facing. The chain crosses the membrane as a helical span at residues 304–324 (LFDIITAIYTISFPICAFICH). Residues 325-377 (PNLFRFLRKFIGWNSYAVRPSNLNEIGGFEMSTAPIRTQTEFHFQELSRQWNT) are Cytoplasmic-facing.

The protein belongs to the G-protein coupled receptor 1 family.

It is found in the cell membrane. The protein is Probable G-protein coupled receptor F27E5.8 of Caenorhabditis elegans.